The chain runs to 346 residues: MNNLKWVAYFLKSRMNWIFWILFLNLLMLGISLIDYDFPIDSLFYIVSLNLSLTMIFLILTYFKEVKLYKHFDKDKEIEEIKHKDLAETPFQRHTVDYLYRQISAHKEKVVEQQLQLNMHEQTITEFVHDIKTPVTAMKLLIDQEKNQERKQALLYEWSRINSMLDTQLYITRLESQRKDMYFDYVSLKRMVIDEIQLTRHISQVKGIGFDVDFKVDDYVYTDTKWCRMIIRQILSNALKYSENFNIEIGTELNDQHVSLYIKDYGRGISKKDMPRIFERGFTSTANRNETTSSGMGLYLVNSVKDQLGIHLQVTSTVGKGTTVRLIFPLQNEIVERMSEVTNLSF.

A run of 2 helical transmembrane segments spans residues 15–35 (MNWIFWILFLNLLMLGISLID) and 43–63 (LFYIVSLNLSLTMIFLILTYF). In terms of domain architecture, Histidine kinase spans 126–332 (EFVHDIKTPV…TVRLIFPLQN (207 aa)).

Interacts with GraX.

Its subcellular location is the cell membrane. It carries out the reaction ATP + protein L-histidine = ADP + protein N-phospho-L-histidine.. Member of the two-component regulatory system GraR/GraS involved in resistance against cationic antimicrobial peptides (CAMPs). Functions as a sensor protein kinase which phosphorylates GraR through the auxiliary protein GraX. In turn, GraR up-regulates many genes such as adhesins, exoproteins, transporters, toxins, and proteins involved in cell wall synthesis. Down-regulates the expression of many genes involved in RNA and amino acid synthesis or glycolysis. The polypeptide is Sensor histidine kinase GraS (graS) (Staphylococcus aureus (strain Mu50 / ATCC 700699)).